Here is a 373-residue protein sequence, read N- to C-terminus: Polygalacturonase (373 aa).

An N-terminal signal peptide occupies residues Met-1 to Arg-24. A disulfide bridge links Cys-27 with Cys-42. Asn-65 and Asn-94 each carry an N-linked (GlcNAc...) asparagine glycan. PbH1 repeat units follow at residues Thr-136 to Gly-158, Ser-159 to Ser-197, Ser-198 to Ser-219, Gly-220 to Ser-240, Val-249 to Ser-270, Ile-278 to Gln-300, Thr-312 to Ala-333, and Cys-345 to Asn-369. Asp-212 (proton donor) is an active-site residue. Residues Cys-214 and Cys-230 are joined by a disulfide bond. The active site involves His-234. Asn-280 and Asn-290 each carry an N-linked (GlcNAc...) asparagine glycan. Intrachain disulfides connect Cys-340/Cys-345 and Cys-364/Cys-371.

The protein belongs to the glycosyl hydrolase 28 family.

It is found in the secreted. It carries out the reaction (1,4-alpha-D-galacturonosyl)n+m + H2O = (1,4-alpha-D-galacturonosyl)n + (1,4-alpha-D-galacturonosyl)m.. Functionally, involved in maceration and soft-rotting of plant tissue. Hydrolyzes the 1,4-alpha glycosidic bonds of de-esterified pectate in the smooth region of the plant cell wall. This chain is Polygalacturonase (PGA), found in Fusarium fujikuroi (Bakanae and foot rot disease fungus).